Here is a 25-residue protein sequence, read N- to C-terminus: Endoglucanase 1 (25 aa).

Positions 1–25 (YDASLKPNLQIPQKNIPNNDAVNIK) are disordered. Over residues 10 to 25 (QIPQKNIPNNDAVNIK) the composition is skewed to polar residues.

It catalyses the reaction Endohydrolysis of (1-&gt;4)-beta-D-glucosidic linkages in cellulose, lichenin and cereal beta-D-glucans.. Its function is as follows. This enzyme hydrolyzes cellotetraose, cellopentaose, and cellohexaose to cellobiose and cellotriose but does not hydrolyze cellobiose or cellotriose. The protein is Endoglucanase 1 of Ruminiclostridium josui (Clostridium josui).